Here is a 190-residue protein sequence, read N- to C-terminus: MRFVVPFADRGDRKTRLSSCMDEETRERFALAMLRHVVRVLSKFGEVEVVTPDSSLSVPGTKVRRSDASLDELPLPDGEFGLVMSDLPLLSEEDVERALEGLKDADVVLCPSRRGGTSGVFVRKGVRFRPTFGGVSFPRNLRRAEKQGVEVAVVKSLGFFADVDEPEDLLDAALLGRREVAKIARSVVEV.

This sequence belongs to the CofC family. In terms of assembly, homodimer.

The catalysed reaction is (2S)-2-phospholactate + GTP + H(+) = (2S)-lactyl-2-diphospho-5'-guanosine + diphosphate. The protein operates within cofactor biosynthesis; coenzyme F420 biosynthesis. Its function is as follows. Guanylyltransferase that catalyzes the activation of (2S)-2-phospholactate (2-PL) as (2S)-lactyl-2-diphospho-5'-guanosine, via the condensation of 2-PL with GTP. It is involved in the biosynthesis of coenzyme F420, a hydride carrier cofactor. The chain is 2-phospho-L-lactate guanylyltransferase from Methanopyrus kandleri (strain AV19 / DSM 6324 / JCM 9639 / NBRC 100938).